Consider the following 367-residue polypeptide: Dual specificity protein phosphatase 1 (367 aa).

Positions 20–137 constitute a Rhodanese domain; it reads RAAQCLLLDC…FSASCPELCS (118 aa). A Tyrosine-protein phosphatase domain is found at 173-314; it reads GPVEILSFLY…LLQFESQVLA (142 aa). C258 acts as the Phosphocysteine intermediate in catalysis. S359 and S364 each carry phosphoserine; by MAPK1 and MAPK3.

Belongs to the protein-tyrosine phosphatase family. Non-receptor class dual specificity subfamily. Phosphorylation at Ser-359 and Ser-364 by MAPK1/ERK2 and MAPK3/ERK1 reduces its rate of degradation. In terms of processing, 'Lys-48'-linked polyubiquitinated by NEURL3, leading to proteasomal degradation. Brain. High level expression seen in the cingulate gyrus within the retrospinal cortex, ventral and medial divisions of the anterior thalamus and the medial geniculate nucleus. Expressed at moderate levels in the parietal and temporal cortex. Expressed in the cerebellum.

The protein localises to the nucleus. The enzyme catalyses O-phospho-L-tyrosyl-[protein] + H2O = L-tyrosyl-[protein] + phosphate. It catalyses the reaction O-phospho-L-seryl-[protein] + H2O = L-seryl-[protein] + phosphate. It carries out the reaction O-phospho-L-threonyl-[protein] + H2O = L-threonyl-[protein] + phosphate. Dual specificity phosphatase that dephosphorylates MAP kinase MAPK1/ERK2 on both 'Thr-183' and 'Tyr-185', regulating its activity during the meiotic cell cycle. This is Dual specificity protein phosphatase 1 from Rattus norvegicus (Rat).